The sequence spans 456 residues: Probable galactarate/D-glucarate transporter GudP (456 aa).

10 helical membrane passes run 11-31, 51-71, 78-96, 102-119, 246-266, 280-300, 317-337, 341-361, 381-401, and 408-428; these read YLIL…RATI, YIFS…GWLL, KVYA…LQGY, ISTA…VGLA, IYLG…WFPV, GIIA…GGVI, TPIV…YVDA, VVCF…GWAV, FGNL…AATG, and SSWV…VGEI.

Belongs to the major facilitator superfamily. Phthalate permease family.

Its subcellular location is the cell inner membrane. The catalysed reaction is galactarate(in) + H(+)(in) = galactarate(out) + H(+)(out). It carries out the reaction D-glucarate(in) + H(+)(in) = D-glucarate(out) + H(+)(out). Probably involved in the uptake of galactarate and/or D-glucarate. In Pseudomonas putida (Arthrobacter siderocapsulatus), this protein is Probable galactarate/D-glucarate transporter GudP (gudP).